We begin with the raw amino-acid sequence, 598 residues long: Nuclear receptor subfamily 4 group A member 2 (598 aa).

The segment at 1–22 (MPCVQAQYGSSPQGASPASQGY) is disordered. Residues 7–18 (QYGSSPQGASPA) show a composition bias toward polar residues. Positions 260-335 (EGLCAVCGDN…VGMVKEVVRT (76 aa)) form a DNA-binding region, nuclear receptor. NR C4-type zinc fingers lie at residues 263-283 (CAVC…CEGC) and 299-318 (CLAN…CQYC). Residues 287–314 (FKRTVQKNAKYVCLANKNCPVDKRRRNR) carry the Bipartite nuclear localization signal (NLS1) motif. The tract at residues 337-361 (SLKGRRGRLPSKPKSPQEPSPPSPP) is disordered. The Nuclear localization signal (NLS1) motif lies at 338–350 (LKGRRGRLPSKPK). Positions 352–361 (PQEPSPPSPP) are enriched in pro residues. Residues 360–595 (PPVSLISALV…AIIDKLFLDT (236 aa)) enclose the NR LBD domain. The nuclear export sequence (NES1) signature appears at 443-452 (FLELFVLRLA). The short motif at 568-577 (QGLQRIFYLK) is the nuclear export sequence (NES2) element.

Belongs to the nuclear hormone receptor family. As to quaternary structure, interacts with SFPQ, NCOR2, SIN3A and HADC1. The interaction with NCOR2 increases in the absence of PITX3. Interacts with PER2.

It localises to the cytoplasm. The protein resides in the nucleus. Its function is as follows. Transcriptional regulator which is important for the differentiation and maintenance of meso-diencephalic dopaminergic (mdDA) neurons during development. It is crucial for expression of a set of genes such as SLC6A3, SLC18A2, TH and DRD2 which are essential for development of mdDA neurons. The polypeptide is Nuclear receptor subfamily 4 group A member 2 (NR4A2) (Pongo abelii (Sumatran orangutan)).